Reading from the N-terminus, the 185-residue chain is Elongation factor P (185 aa).

It belongs to the elongation factor P family.

The protein localises to the cytoplasm. It functions in the pathway protein biosynthesis; polypeptide chain elongation. Functionally, involved in peptide bond synthesis. Stimulates efficient translation and peptide-bond synthesis on native or reconstituted 70S ribosomes in vitro. Probably functions indirectly by altering the affinity of the ribosome for aminoacyl-tRNA, thus increasing their reactivity as acceptors for peptidyl transferase. This Burkholderia vietnamiensis (strain G4 / LMG 22486) (Burkholderia cepacia (strain R1808)) protein is Elongation factor P.